Reading from the N-terminus, the 609-residue chain is DNA polymerase alpha subunit B (609 aa).

Phosphoserine is present on Ser155. Thr164 is modified (phosphothreonine). 2 positions are modified to phosphoserine: Ser166 and Ser168.

This sequence belongs to the DNA polymerase alpha subunit B family. As to quaternary structure, component of the alpha DNA polymerase complex (also known as the alpha DNA polymerase-primase complex) consisting of four subunits: the catalytic subunit PolA1, the regulatory subunit PolA2, and the primase complex subunits Prim1 and Prim2 respectively. PolA1 associates with the DNA primase complex before association with PolA2. In terms of processing, phosphorylated in embryos until cycle 13. In terms of tissue distribution, expressed in embryos (at protein level).

Its subcellular location is the nucleus. In terms of biological role, accessory subunit of the DNA polymerase alpha complex (also known as the alpha DNA polymerase-primase complex) which plays an essential role in the initiation of DNA synthesis. During the S phase of the cell cycle, the DNA polymerase alpha complex (composed of a catalytic subunit PolA1, an accessory subunit PolA2 and two primase subunits, the catalytic subunit Prim1 and the regulatory subunit Prim2) is recruited to DNA at the replicative forks. The primase subunit of the polymerase alpha complex initiates DNA synthesis by oligomerising short RNA primers on both leading and lagging strands. These primers are initially extended by the polymerase alpha catalytic subunit and subsequently transferred to polymerase delta and polymerase epsilon for processive synthesis on the lagging and leading strand, respectively. The chain is DNA polymerase alpha subunit B from Drosophila melanogaster (Fruit fly).